Here is a 332-residue protein sequence, read N- to C-terminus: Fructose-1,6-bisphosphatase class 1 (332 aa).

Positions 89, 110, 112, and 113 each coordinate Mg(2+). Residues 113-116 (DGSS), N206, Y239, 257-259 (YLY), and K269 contribute to the substrate site. Residue E275 participates in Mg(2+) binding.

This sequence belongs to the FBPase class 1 family. Homotetramer. The cofactor is Mg(2+).

The protein localises to the cytoplasm. It catalyses the reaction beta-D-fructose 1,6-bisphosphate + H2O = beta-D-fructose 6-phosphate + phosphate. It participates in carbohydrate biosynthesis; gluconeogenesis. This Salmonella gallinarum (strain 287/91 / NCTC 13346) protein is Fructose-1,6-bisphosphatase class 1.